Consider the following 240-residue polypeptide: Pyridoxine 5'-phosphate synthase (240 aa).

Asn6 is a binding site for 3-amino-2-oxopropyl phosphate. 8–9 (DH) contributes to the 1-deoxy-D-xylulose 5-phosphate binding site. Arg17 serves as a coordination point for 3-amino-2-oxopropyl phosphate. His42 serves as the catalytic Proton acceptor. 1-deoxy-D-xylulose 5-phosphate is bound by residues Arg44 and His49. Glu69 (proton acceptor) is an active-site residue. Thr99 contacts 1-deoxy-D-xylulose 5-phosphate. His190 (proton donor) is an active-site residue. Residues Gly191 and 212 to 213 (GH) contribute to the 3-amino-2-oxopropyl phosphate site.

Belongs to the PNP synthase family. In terms of assembly, homooctamer; tetramer of dimers.

It is found in the cytoplasm. It carries out the reaction 3-amino-2-oxopropyl phosphate + 1-deoxy-D-xylulose 5-phosphate = pyridoxine 5'-phosphate + phosphate + 2 H2O + H(+). It participates in cofactor biosynthesis; pyridoxine 5'-phosphate biosynthesis; pyridoxine 5'-phosphate from D-erythrose 4-phosphate: step 5/5. Catalyzes the complicated ring closure reaction between the two acyclic compounds 1-deoxy-D-xylulose-5-phosphate (DXP) and 3-amino-2-oxopropyl phosphate (1-amino-acetone-3-phosphate or AAP) to form pyridoxine 5'-phosphate (PNP) and inorganic phosphate. In Pseudomonas entomophila (strain L48), this protein is Pyridoxine 5'-phosphate synthase.